The primary structure comprises 348 residues: S-adenosylmethionine:tRNA ribosyltransferase-isomerase (348 aa).

It belongs to the QueA family. Monomer.

It localises to the cytoplasm. It carries out the reaction 7-aminomethyl-7-carbaguanosine(34) in tRNA + S-adenosyl-L-methionine = epoxyqueuosine(34) in tRNA + adenine + L-methionine + 2 H(+). It participates in tRNA modification; tRNA-queuosine biosynthesis. Transfers and isomerizes the ribose moiety from AdoMet to the 7-aminomethyl group of 7-deazaguanine (preQ1-tRNA) to give epoxyqueuosine (oQ-tRNA). The protein is S-adenosylmethionine:tRNA ribosyltransferase-isomerase of Tolumonas auensis (strain DSM 9187 / NBRC 110442 / TA 4).